Consider the following 158-residue polypeptide: MAEVVEVLVPGGKATAGPPLGPALGPLGINVKAVVDEINKKTASFNGMQVPVRVEVDEKKNFTISVGIPPTTALIMKEAGVEKGSGEPNTKIVGDVPLEAAVTIAKMKLDDMLSYDLKNAVKEVVGTCVSLGITVSGKKPKDMLKEIDSGAHDAVLVG.

It belongs to the universal ribosomal protein uL11 family. In terms of assembly, part of the ribosomal stalk of the 50S ribosomal subunit. Interacts with L10 and the large rRNA to form the base of the stalk. L10 forms an elongated spine to which L12 dimers bind in a sequential fashion forming a multimeric L10(L12)X complex.

Its function is as follows. Forms part of the ribosomal stalk which helps the ribosome interact with GTP-bound translation factors. The protein is Large ribosomal subunit protein uL11 of Methanospirillum hungatei JF-1 (strain ATCC 27890 / DSM 864 / NBRC 100397 / JF-1).